The sequence spans 475 residues: Cysteine--tRNA ligase (475 aa).

Cysteine 28 lines the Zn(2+) pocket. A 'HIGH' region motif is present at residues 30-40 (PTVYDETHIGH). Zn(2+) contacts are provided by cysteine 208, histidine 233, and glutamate 237. The 'KMSKS' region motif lies at 265-269 (KMSKS). Lysine 268 is a binding site for ATP.

The protein belongs to the class-I aminoacyl-tRNA synthetase family. Zn(2+) is required as a cofactor.

The protein resides in the cytoplasm. It catalyses the reaction tRNA(Cys) + L-cysteine + ATP = L-cysteinyl-tRNA(Cys) + AMP + diphosphate. The protein is Cysteine--tRNA ligase of Methanococcus vannielii (strain ATCC 35089 / DSM 1224 / JCM 13029 / OCM 148 / SB).